The primary structure comprises 291 residues: Homoserine kinase (291 aa).

Position 80–90 (80–90 (RPASGLGSSAA)) interacts with ATP.

This sequence belongs to the GHMP kinase family. Homoserine kinase subfamily.

It localises to the cytoplasm. The catalysed reaction is L-homoserine + ATP = O-phospho-L-homoserine + ADP + H(+). The protein operates within amino-acid biosynthesis; L-threonine biosynthesis; L-threonine from L-aspartate: step 4/5. Catalyzes the ATP-dependent phosphorylation of L-homoserine to L-homoserine phosphate. The polypeptide is Homoserine kinase (Haloarcula marismortui (strain ATCC 43049 / DSM 3752 / JCM 8966 / VKM B-1809) (Halobacterium marismortui)).